The following is a 569-amino-acid chain: Proline--tRNA ligase (569 aa).

Belongs to the class-II aminoacyl-tRNA synthetase family. ProS type 1 subfamily. In terms of assembly, homodimer.

It localises to the cytoplasm. The catalysed reaction is tRNA(Pro) + L-proline + ATP = L-prolyl-tRNA(Pro) + AMP + diphosphate. Its function is as follows. Catalyzes the attachment of proline to tRNA(Pro) in a two-step reaction: proline is first activated by ATP to form Pro-AMP and then transferred to the acceptor end of tRNA(Pro). As ProRS can inadvertently accommodate and process non-cognate amino acids such as alanine and cysteine, to avoid such errors it has two additional distinct editing activities against alanine. One activity is designated as 'pretransfer' editing and involves the tRNA(Pro)-independent hydrolysis of activated Ala-AMP. The other activity is designated 'posttransfer' editing and involves deacylation of mischarged Ala-tRNA(Pro). The misacylated Cys-tRNA(Pro) is not edited by ProRS. The sequence is that of Proline--tRNA ligase from Campylobacter jejuni (strain RM1221).